Here is a 716-residue protein sequence, read N- to C-terminus: Ciliary WD repeat-containing protein ctxp80 (716 aa).

Residues 1–53 (MGCGGSSGASDPSSEKINWNNAEIHDEFKQEQKKAGAKRKAFDKTTGKAVEKE) are disordered. The span at 8–21 (GASDPSSEKINWNN) shows a compositional bias: polar residues. Positions 23 to 53 (EIHDEFKQEQKKAGAKRKAFDKTTGKAVEKE) are enriched in basic and acidic residues. 10 WD repeats span residues 167 to 208 (YHTN…KKGR), 213 to 254 (KGGR…QVKK), 257 to 297 (SGPD…FKKK), 305 to 343 (GKPT…STYD), 345 to 382 (HGKG…AEKT), 424 to 462 (HSDG…STAL), 529 to 568 (DSGE…KLGT), 571 to 610 (AHNS…QDPS), 639 to 678 (TDGT…GATP), and 683 to 715 (GHSE…QWKK).

This sequence belongs to the WD repeat EMAP family.

This is Ciliary WD repeat-containing protein ctxp80 from Euplotoides octocarinatus (Freshwater ciliate).